The following is a 301-amino-acid chain: Elongation factor Ts (301 aa).

The segment at 82–85 (TDFV) is involved in Mg(2+) ion dislocation from EF-Tu.

Belongs to the EF-Ts family.

Its subcellular location is the cytoplasm. Its function is as follows. Associates with the EF-Tu.GDP complex and induces the exchange of GDP to GTP. It remains bound to the aminoacyl-tRNA.EF-Tu.GTP complex up to the GTP hydrolysis stage on the ribosome. The polypeptide is Elongation factor Ts (Hyphomonas neptunium (strain ATCC 15444)).